A 248-amino-acid chain; its full sequence is N-acylneuraminate-9-phosphatase (248 aa).

D12 serves as a coordination point for Mg(2+). Residues L13, D14, T131, N132, and K164 each coordinate phosphate. Position 14 (D14) interacts with Mg(2+). D189 provides a ligand contact to Mg(2+).

The protein belongs to the HAD-like hydrolase superfamily. NANP family. The cofactor is Mg(2+).

It carries out the reaction N-acetylneuraminate 9-phosphate + H2O = N-acetylneuraminate + phosphate. The enzyme catalyses N-glycoloylneuraminate 9-phosphate + H2O = N-glycoloylneuraminate + phosphate. It participates in amino-sugar metabolism; N-acetylneuraminate biosynthesis. With respect to regulation, inhibited by calcium. Inhibited by vanadate, sodium orthovanadate and phosphonate. In terms of biological role, catalyzes the dephosphorylation of N-acylneuraminate 9-phosphate (Neu5Ac-9-P) to N-acetylneuraminic acid (Neu5Ac or sialic acid). Can also use N-glycoloylneuraminate 9-phosphate as substrate. The protein is N-acylneuraminate-9-phosphatase of Rattus norvegicus (Rat).